We begin with the raw amino-acid sequence, 956 residues long: Pollen-specific leucine-rich repeat extensin-like protein 1 (956 aa).

Positions Met1 to Ala30 are cleaved as a signal peptide. LRR repeat units follow at residues Leu39 to Tyr59, Glu60 to Lys84, Val119 to Leu143, Thr144 to Lys166, Thr168 to Trp191, Pro192 to Lys215, Leu217 to Ser238, Ala240 to Met261, Lys262 to Leu285, Asn287 to Leu309, and Ala310 to Lys332. 2 N-linked (GlcNAc...) asparagine glycosylation sites follow: Asn273 and Asn287. N-linked (GlcNAc...) asparagine glycosylation is present at Asn338. Over residues Pro355–Lys377 the composition is skewed to polar residues. Disordered regions lie at residues Pro355–Lys380 and Cys397–Tyr956. Residues Ser408 to Ala417 are compositionally biased toward pro residues. Composition is skewed to basic and acidic residues over residues Glu431–Pro441 and Thr452–Pro534. Residues Gln640–Thr830 show a composition bias toward pro residues. Residues Pro651–Tyr956 form a contains the Ser-Pro(4) repeats region. Residues Pro837–Gln852 show a composition bias toward polar residues. The segment covering Ser947–Tyr956 has biased composition (pro residues).

In terms of processing, hydroxylated on proline residues in the S-P-P-P-P repeat. O-glycosylated on hydroxyprolines. As to expression, expressed in flowers, stamen, pollen, and pollinated carpels.

Its subcellular location is the secreted. It localises to the cell wall. Functionally, modulates cell morphogenesis by regulating cell wall formation and assembly, and/or growth polarization. The sequence is that of Pollen-specific leucine-rich repeat extensin-like protein 1 (PEX1) from Arabidopsis thaliana (Mouse-ear cress).